Here is a 509-residue protein sequence, read N- to C-terminus: ATP synthase subunit alpha, mitochondrial (509 aa).

171–178 (GDRQTGKT) contributes to the ATP binding site.

The protein belongs to the ATPase alpha/beta chains family. F-type ATPases have 2 components, CF(1) - the catalytic core - and CF(0) - the membrane proton channel. CF(1) has five subunits: alpha(3), beta(3), gamma(1), delta(1), epsilon(1). CF(0) has three main subunits: a, b and c.

The protein resides in the mitochondrion. The protein localises to the mitochondrion inner membrane. Functionally, mitochondrial membrane ATP synthase (F(1)F(0) ATP synthase or Complex V) produces ATP from ADP in the presence of a proton gradient across the membrane which is generated by electron transport complexes of the respiratory chain. F-type ATPases consist of two structural domains, F(1) - containing the extramembraneous catalytic core, and F(0) - containing the membrane proton channel, linked together by a central stalk and a peripheral stalk. During catalysis, ATP synthesis in the catalytic domain of F(1) is coupled via a rotary mechanism of the central stalk subunits to proton translocation. Subunits alpha and beta form the catalytic core in F(1). Rotation of the central stalk against the surrounding alpha(3)beta(3) subunits leads to hydrolysis of ATP in three separate catalytic sites on the beta subunits. Subunit alpha does not bear the catalytic high-affinity ATP-binding sites. This chain is ATP synthase subunit alpha, mitochondrial (ATPA), found in Triticum aestivum (Wheat).